Reading from the N-terminus, the 130-residue chain is Large ribosomal subunit protein bL20 (130 aa).

Belongs to the bacterial ribosomal protein bL20 family.

In terms of biological role, binds directly to 23S ribosomal RNA and is necessary for the in vitro assembly process of the 50S ribosomal subunit. It is not involved in the protein synthesizing functions of that subunit. In Clavibacter michiganensis subsp. michiganensis (strain NCPPB 382), this protein is Large ribosomal subunit protein bL20.